Reading from the N-terminus, the 900-residue chain is Isoleucine--tRNA ligase (900 aa).

The 'HIGH' region signature appears at 59–69 (PYANGNIHMGH). Glu-550 serves as a coordination point for L-isoleucyl-5'-AMP. A 'KMSKS' region motif is present at residues 591-595 (KMSKS). Lys-594 lines the ATP pocket. Residues Cys-876, Cys-879, Cys-892, and Cys-895 each coordinate Zn(2+).

It belongs to the class-I aminoacyl-tRNA synthetase family. IleS type 1 subfamily. Monomer. Requires Zn(2+) as cofactor.

It localises to the cytoplasm. The catalysed reaction is tRNA(Ile) + L-isoleucine + ATP = L-isoleucyl-tRNA(Ile) + AMP + diphosphate. Functionally, catalyzes the attachment of isoleucine to tRNA(Ile). As IleRS can inadvertently accommodate and process structurally similar amino acids such as valine, to avoid such errors it has two additional distinct tRNA(Ile)-dependent editing activities. One activity is designated as 'pretransfer' editing and involves the hydrolysis of activated Val-AMP. The other activity is designated 'posttransfer' editing and involves deacylation of mischarged Val-tRNA(Ile). This is Isoleucine--tRNA ligase from Onion yellows phytoplasma (strain OY-M).